A 104-amino-acid chain; its full sequence is Small ribosomal subunit protein uS10 (104 aa).

The protein belongs to the universal ribosomal protein uS10 family. As to quaternary structure, part of the 30S ribosomal subunit.

Functionally, involved in the binding of tRNA to the ribosomes. The protein is Small ribosomal subunit protein uS10 of Gloeobacter violaceus (strain ATCC 29082 / PCC 7421).